Here is a 340-residue protein sequence, read N- to C-terminus: Ketol-acid reductoisomerase (NADP(+)) (340 aa).

A KARI N-terminal Rossmann domain is found at 3–182 (VQMEYEKDVK…GAARVGLLET (180 aa)). Residues 26-29 (YGSQ), arginine 49, serine 53, and 83-86 (DEIQ) each bind NADP(+). The active site involves histidine 108. Glycine 134 contributes to the NADP(+) binding site. Positions 183 to 328 (TYKEETEEDL…AELRKAMPFV (146 aa)) constitute a KARI C-terminal knotted domain. Mg(2+) contacts are provided by aspartate 191, glutamate 195, glutamate 227, and glutamate 231. Serine 252 provides a ligand contact to substrate.

This sequence belongs to the ketol-acid reductoisomerase family. It depends on Mg(2+) as a cofactor.

The enzyme catalyses (2R)-2,3-dihydroxy-3-methylbutanoate + NADP(+) = (2S)-2-acetolactate + NADPH + H(+). It carries out the reaction (2R,3R)-2,3-dihydroxy-3-methylpentanoate + NADP(+) = (S)-2-ethyl-2-hydroxy-3-oxobutanoate + NADPH + H(+). It participates in amino-acid biosynthesis; L-isoleucine biosynthesis; L-isoleucine from 2-oxobutanoate: step 2/4. It functions in the pathway amino-acid biosynthesis; L-valine biosynthesis; L-valine from pyruvate: step 2/4. Involved in the biosynthesis of branched-chain amino acids (BCAA). Catalyzes an alkyl-migration followed by a ketol-acid reduction of (S)-2-acetolactate (S2AL) to yield (R)-2,3-dihydroxy-isovalerate. In the isomerase reaction, S2AL is rearranged via a Mg-dependent methyl migration to produce 3-hydroxy-3-methyl-2-ketobutyrate (HMKB). In the reductase reaction, this 2-ketoacid undergoes a metal-dependent reduction by NADPH to yield (R)-2,3-dihydroxy-isovalerate. The chain is Ketol-acid reductoisomerase (NADP(+)) from Streptococcus thermophilus (strain ATCC BAA-491 / LMD-9).